Reading from the N-terminus, the 707-residue chain is Methionine--tRNA ligase (707 aa).

The 'HIGH' region motif lies at 13–23 (PYANGNFHIGH). 4 residues coordinate Zn(2+): Cys-147, Cys-150, Cys-160, and Cys-163. The 'KMSKS' region signature appears at 344–348 (KMSKS). Position 347 (Lys-347) interacts with ATP. A tRNA-binding domain is found at 601–707 (DFAKVDLRIA…PGATPGMRIH (107 aa)).

This sequence belongs to the class-I aminoacyl-tRNA synthetase family. MetG type 1 subfamily. Homodimer. Requires Zn(2+) as cofactor.

It localises to the cytoplasm. The catalysed reaction is tRNA(Met) + L-methionine + ATP = L-methionyl-tRNA(Met) + AMP + diphosphate. In terms of biological role, is required not only for elongation of protein synthesis but also for the initiation of all mRNA translation through initiator tRNA(fMet) aminoacylation. The chain is Methionine--tRNA ligase from Polaromonas naphthalenivorans (strain CJ2).